A 145-amino-acid polypeptide reads, in one-letter code: Spanin, inner membrane subunit (145 aa).

Residues 1 to 3 (MSR) lie on the Cytoplasmic side of the membrane. The chain crosses the membrane as a helical; Signal-anchor for type II membrane protein span at residues 4–24 (IKAIIASVIICIIVCLSWAVN). Topologically, residues 25-145 (HYRDNAITYK…QEYIRSQCLK (121 aa)) are periplasmic.

Belongs to the Lambdavirus i-spanin family. Homodimer; disulfide-linked. Interacts (via C-terminus) with the spanin outer lipoprotein subunit (via C-terminus). Part of the spanin complex which spans the entire periplasmic space. The spanin complex is composed of one homodimer of the i-spanin linked by intermolecular disulfide bonds involving two Cys residues and one homodimer of the o-spanin covalently linked by an intermolecular disulfide bond involving one Cys.

It localises to the host cell inner membrane. In terms of biological role, component of the spanin complex that disrupts the host outer membrane and participates in cell lysis during virus exit. The spanin complex conducts the final step in host lysis by disrupting the outer membrane after holin and endolysin action have permeabilized the inner membrane and degraded the host peptidoglycans. Host outer membrane disruption is due to local fusion between the inner and outer membrane performed by the spanin complex. This is Spanin, inner membrane subunit (15) from Salmonella typhimurium (Bacteriophage P22).